The primary structure comprises 567 residues: Glucose-6-phosphate isomerase, cytosolic (567 aa).

Glu360 acts as the Proton donor in catalysis. Active-site residues include His391 and Lys516.

The protein belongs to the GPI family. As to quaternary structure, homodimer.

The protein localises to the cytoplasm. The enzyme catalyses alpha-D-glucose 6-phosphate = beta-D-fructose 6-phosphate. It functions in the pathway carbohydrate degradation; glycolysis; D-glyceraldehyde 3-phosphate and glycerone phosphate from D-glucose: step 2/4. This is Glucose-6-phosphate isomerase, cytosolic (PHI1) from Zea mays (Maize).